We begin with the raw amino-acid sequence, 428 residues long: Ribulose bisphosphate carboxylase (428 aa).

The active-site Proton acceptor is Lys-151. Lys-153 provides a ligand contact to substrate. 3 residues coordinate Mg(2+): Lys-177, Asp-179, and Glu-180. N6-carboxylysine is present on Lys-177. His-270 acts as the Proton acceptor in catalysis. Substrate is bound by residues Arg-271, His-303, 354–356 (SGG), and 376–379 (QFGG).

The protein belongs to the RuBisCO large chain family. Type III subfamily. In terms of assembly, homodimer. In contrast to form I RuBisCO, the form III RuBisCO is composed solely of large subunits. Mg(2+) serves as cofactor.

The catalysed reaction is 2 (2R)-3-phosphoglycerate + 2 H(+) = D-ribulose 1,5-bisphosphate + CO2 + H2O. It catalyses the reaction D-ribulose 1,5-bisphosphate + O2 = 2-phosphoglycolate + (2R)-3-phosphoglycerate + 2 H(+). Its activity is regulated as follows. Reversibly inhibited by O(2). Functionally, catalyzes the addition of molecular CO(2) and H(2)O to ribulose 1,5-bisphosphate (RuBP), generating two molecules of 3-phosphoglycerate (3-PGA). Functions in an archaeal AMP degradation pathway, together with AMP phosphorylase and R15P isomerase. This is Ribulose bisphosphate carboxylase from Methanosarcina acetivorans (strain ATCC 35395 / DSM 2834 / JCM 12185 / C2A).